Consider the following 644-residue polypeptide: ATP-dependent zinc metalloprotease FtsH (644 aa).

Over 1 to 4 (MAKN) the chain is Cytoplasmic. A helical transmembrane segment spans residues 5–25 (LILWLVIAVVLMSVFQSFGPS). Residues 26-98 (ESNGRKVDYS…VGEPPEEPSL (73 aa)) lie on the Periplasmic side of the membrane. Residues 99 to 119 (LASIFISWFPMLLLIGVWIFF) traverse the membrane as a helical segment. The Cytoplasmic segment spans residues 120-644 (MRQMQGGGGK…NTMSEQLGDK (525 aa)). 192–199 (GPPGTGKT) lines the ATP pocket. Zn(2+) is bound at residue histidine 414. Glutamate 415 is an active-site residue. Residues histidine 418 and aspartate 492 each coordinate Zn(2+). Residues 598 to 644 (VRPPAGWEEPGASNNAGDNGSPKAPRPVDEPRTPNPGNTMSEQLGDK) are disordered. Residues 632-644 (NPGNTMSEQLGDK) are compositionally biased toward polar residues.

In the central section; belongs to the AAA ATPase family. It in the C-terminal section; belongs to the peptidase M41 family. As to quaternary structure, homohexamer. Zn(2+) is required as a cofactor.

It localises to the cell inner membrane. In terms of biological role, acts as a processive, ATP-dependent zinc metallopeptidase for both cytoplasmic and membrane proteins. Plays a role in the quality control of integral membrane proteins. The polypeptide is ATP-dependent zinc metalloprotease FtsH (Escherichia coli O157:H7).